The chain runs to 473 residues: Photosystem II CP43 reaction center protein (473 aa).

A propeptide spanning residues 1 to 14 is cleaved from the precursor; the sequence is MKTLYSLRRFSHVE. An N-acetylthreonine modification is found at Thr15. Position 15 is a phosphothreonine (Thr15). 5 consecutive transmembrane segments (helical) span residues 69-93, 134-155, 178-200, 255-275, and 291-312; these read LFEV…PHLA, LLGP…KDRN, KALY…RKIT, KPFA…LSYS, and WFNN…ASQA. Glu367 is a binding site for [CaMn4O5] cluster. The chain crosses the membrane as a helical span at residues 447 to 471; that stretch reads RARAAAAGFEKGIDRDFEPVLSMTP.

Belongs to the PsbB/PsbC family. PsbC subfamily. PSII is composed of 1 copy each of membrane proteins PsbA, PsbB, PsbC, PsbD, PsbE, PsbF, PsbH, PsbI, PsbJ, PsbK, PsbL, PsbM, PsbT, PsbX, PsbY, PsbZ, Psb30/Ycf12, at least 3 peripheral proteins of the oxygen-evolving complex and a large number of cofactors. It forms dimeric complexes. The cofactor is Binds multiple chlorophylls and provides some of the ligands for the Ca-4Mn-5O cluster of the oxygen-evolving complex. It may also provide a ligand for a Cl- that is required for oxygen evolution. PSII binds additional chlorophylls, carotenoids and specific lipids..

It is found in the plastid membrane. One of the components of the core complex of photosystem II (PSII). It binds chlorophyll and helps catalyze the primary light-induced photochemical processes of PSII. PSII is a light-driven water:plastoquinone oxidoreductase, using light energy to abstract electrons from H(2)O, generating O(2) and a proton gradient subsequently used for ATP formation. The protein is Photosystem II CP43 reaction center protein of Cuscuta gronovii (Common dodder).